A 102-amino-acid chain; its full sequence is Protein S100-A11 (102 aa).

Phosphoserine is present on serine 2. Threonine 7 is modified (phosphothreonine). EF-hand domains follow at residues 12 to 47 (ESLIAVFQKYAGKDGHSVTLSKTEFLSFMNTELAAF) and 52 to 87 (KDPGVLDRMMKKLDLNSDGQLDFQEFLNLIGGLAVA). Lysine 24 is modified (N6-acetyllysine). Ca(2+) contacts are provided by serine 28, threonine 30, glutamate 35, aspartate 65, asparagine 67, aspartate 69, glutamine 71, and glutamate 76.

Belongs to the S-100 family. Homodimer; disulfide-linked. Post-translationally, phosphorylation at Thr-7 significantly suppresses homodimerization and promotes association with NCL/nucleolin which induces nuclear translocation. As to expression, smooth muscle and non-muscle tissues.

The protein resides in the cytoplasm. Its subcellular location is the nucleus. Its function is as follows. Facilitates the differentiation and the cornification of keratinocytes. The protein is Protein S100-A11 (S100A11) of Oryctolagus cuniculus (Rabbit).